The chain runs to 622 residues: UvrABC system protein C (622 aa).

In terms of domain architecture, GIY-YIG spans 12-91 (SSPGVYIMKD…IKKYRPKYNF (80 aa)). The UVR domain occupies 201 to 236 (REILKIFRERMSAAAAAEKYEKAARFRDLIRSIEVT).

Belongs to the UvrC family. Interacts with UvrB in an incision complex.

The protein localises to the cytoplasm. The UvrABC repair system catalyzes the recognition and processing of DNA lesions. UvrC both incises the 5' and 3' sides of the lesion. The N-terminal half is responsible for the 3' incision and the C-terminal half is responsible for the 5' incision. This chain is UvrABC system protein C, found in Geotalea daltonii (strain DSM 22248 / JCM 15807 / FRC-32) (Geobacter daltonii).